The primary structure comprises 145 residues: 3-hydroxyacyl-[acyl-carrier-protein] dehydratase FabZ (145 aa).

His48 is a catalytic residue.

This sequence belongs to the thioester dehydratase family. FabZ subfamily.

The protein localises to the cytoplasm. It carries out the reaction a (3R)-hydroxyacyl-[ACP] = a (2E)-enoyl-[ACP] + H2O. In terms of biological role, involved in unsaturated fatty acids biosynthesis. Catalyzes the dehydration of short chain beta-hydroxyacyl-ACPs and long chain saturated and unsaturated beta-hydroxyacyl-ACPs. In Marinomonas sp. (strain MWYL1), this protein is 3-hydroxyacyl-[acyl-carrier-protein] dehydratase FabZ.